The chain runs to 485 residues: ETS translocation variant 4 (485 aa).

A Glycyl lysine isopeptide (Lys-Gly) (interchain with G-Cter in SUMO2) cross-link involves residue K6. Disordered regions lie at residues P79–P114 and I135–L214. K95 is covalently cross-linked (Glycyl lysine isopeptide (Lys-Gly) (interchain with G-Cter in SUMO)). The residue at position 100 (S100) is a Phosphoserine. Residue K138 forms a Glycyl lysine isopeptide (Lys-Gly) (interchain with G-Cter in SUMO2) linkage. A phosphoserine mark is found at S139 and S148. Over residues Q158–S171 the composition is skewed to low complexity. S215 is subject to Phosphoserine. Glycyl lysine isopeptide (Lys-Gly) (interchain with G-Cter in SUMO) cross-links involve residues K227 and K261. A Glycyl lysine isopeptide (Lys-Gly) (interchain with G-Cter in SUMO2) cross-link involves residue K323. The ETS DNA-binding region spans L342–V422.

The protein belongs to the ETS family. Sumoylated; enhanced upon ERK/MAP kinase pathway activation it positively regulates the transcriptional activator capacity. Sumoylation at Lys-95 probably requires phosphorylation at Ser-100. Transiently polysumoylated and desumoylated by SENP1. Sumoylation is a prerequisite to polyubiquitination which in turn increases proteasomal-mediated degradation. Probably polyubiquitinated by RNF4 and deubiquitinated by USP2. In terms of tissue distribution, epididymis and brain.

It localises to the nucleus. Functionally, transcriptional activator. May play a role in keratinocyte differentiation. The sequence is that of ETS translocation variant 4 (Etv4) from Mus musculus (Mouse).